Consider the following 351-residue polypeptide: MNKVGILLILFILSLILPFTALYLAGDTHLITVKDIINFLLKGTTGNEFKDIIIKDVRLPPIIGAVLIGLTISVAGLMLQTLFRNLLASPYTTGISSGVLMVVALVIFIDSLSHLFEIFGEKSILVAGWCGGIFSMILLIIIALRVREANGVIIVALLLSYFFMGLRAYLIANAEELKIQEYWGFTIGSLSKITLGDVIPMTICSIIFIIGVMFLIKSLNALLFGEQYAKSFGLDIKKTRLLVLFFASFITGAIIPYVGLIAFIGIIAPYLARPLIKTSDHRYLVPATMFLGVILMVSCHILSLKYYLPIHYLYGINRPASPLPIGAVLDILGGMLVVYLVYKGEKKIKID.

A run of 9 helical transmembrane segments spans residues 4–24 (VGILLILFILSLILPFTALYL), 59–79 (LPPIIGAVLIGLTISVAGLML), 99–119 (VLMVVALVIFIDSLSHLFEIF), 124–144 (ILVAGWCGGIFSMILLIIIAL), 152–172 (VIIVALLLSYFFMGLRAYLIA), 196–216 (GDVIPMTICSIIFIIGVMFLI), 249–269 (FITGAIIPYVGLIAFIGIIAP), 284–304 (LVPATMFLGVILMVSCHILSL), and 322–342 (PLPIGAVLDILGGMLVVYLVY).

This sequence belongs to the binding-protein-dependent transport system permease family. FecCD subfamily.

Its subcellular location is the cell membrane. Probably part of a binding-protein-dependent transport system. Probably responsible for the translocation of the substrate across the membrane. In Methanocaldococcus jannaschii (strain ATCC 43067 / DSM 2661 / JAL-1 / JCM 10045 / NBRC 100440) (Methanococcus jannaschii), this protein is Putative ABC transporter permease protein MJ0876.